Here is a 546-residue protein sequence, read N- to C-terminus: Probable Dol-P-Man:Man(7)GlcNAc(2)-PP-Dol alpha-1,6-mannosyltransferase (546 aa).

The next 9 helical transmembrane spans lie at 5-25 (ESICWYLANILLVTCIGYYSY), 67-87 (FIPSLFIAVLSYIPSWFVNPL), 113-133 (FGTLSGALFILFSCAQFHLVY), 166-186 (ILVFAAAIVRSEIALLLMCLI), 200-220 (LLLVGISSSLAAVGASFLIDS), 258-278 (LPWLFLNPTTLLFLLISFVYI), 283-303 (LLIYVPLFFIFVYSFLGHKEW), 305-325 (FIIYSIPWFNAASAIGASLCF), and 340-360 (LMFFSGIIFGFIGSSFLLYVF).

This sequence belongs to the glycosyltransferase 22 family.

Its subcellular location is the endoplasmic reticulum membrane. It carries out the reaction an alpha-D-Man-(1-&gt;2)-alpha-D-Man-(1-&gt;2)-alpha-D-Man-(1-&gt;3)-[alpha-D-Man-(1-&gt;2)-alpha-D-Man-(1-&gt;3)-alpha-D-Man-(1-&gt;6)]-beta-D-Man-(1-&gt;4)-beta-D-GlcNAc-(1-&gt;4)-alpha-D-GlcNAc-diphospho-di-trans,poly-cis-dolichol + a di-trans,poly-cis-dolichyl beta-D-mannosyl phosphate = an alpha-D-Man-(1-&gt;2)-alpha-D-Man-(1-&gt;2)-alpha-D-Man-(1-&gt;3)-[alpha-D-Man-(1-&gt;2)-alpha-D-Man-(1-&gt;3)-[alpha-D-Man-(1-&gt;6)]-alpha-D-Man-(1-&gt;6)]-beta-D-Man-(1-&gt;4)-beta-D-GlcNAc-(1-&gt;4)-alpha-D-GlcNAc-diphospho-di-trans,poly-cis-dolichol + a di-trans,poly-cis-dolichyl phosphate + H(+). The protein operates within protein modification; protein glycosylation. Mannosyltransferase that operates in the biosynthetic pathway of dolichol-linked oligosaccharides, the glycan precursors employed in protein asparagine (N)-glycosylation. The assembly of dolichol-linked oligosaccharides begins on the cytosolic side of the endoplasmic reticulum membrane and finishes in its lumen. The sequential addition of sugars to dolichol pyrophosphate produces dolichol-linked oligosaccharides containing fourteen sugars, including two GlcNAcs, nine mannoses and three glucoses. Once assembled, the oligosaccharide is transferred from the lipid to nascent proteins by oligosaccharyltransferases. In the lumen of the endoplasmic reticulum, adds the eighth mannose residue in an alpha-1,6 linkage onto Man(7)GlcNAc(2)-PP-dolichol to produce Man(8)GlcNAc(2)-PP-dolichol. The protein is Probable Dol-P-Man:Man(7)GlcNAc(2)-PP-Dol alpha-1,6-mannosyltransferase (alg12) of Schizosaccharomyces pombe (strain 972 / ATCC 24843) (Fission yeast).